A 396-amino-acid chain; its full sequence is Elongation factor Tu (396 aa).

Residues 10 to 206 (KPHVNVGTIG…VLDTYIPEPE (197 aa)) form the tr-type G domain. Positions 19–26 (GHVDHGKT) are G1. 19–26 (GHVDHGKT) is a GTP binding site. Thr26 is a Mg(2+) binding site. A G2 region spans residues 60–64 (GITIN). The tract at residues 81 to 84 (DCPG) is G3. GTP contacts are provided by residues 81-85 (DCPGH) and 136-139 (NKCD). The segment at 136–139 (NKCD) is G4. The interval 174–176 (SAT) is G5.

The protein belongs to the TRAFAC class translation factor GTPase superfamily. Classic translation factor GTPase family. EF-Tu/EF-1A subfamily. Monomer.

It localises to the cytoplasm. It carries out the reaction GTP + H2O = GDP + phosphate + H(+). Functionally, GTP hydrolase that promotes the GTP-dependent binding of aminoacyl-tRNA to the A-site of ribosomes during protein biosynthesis. This is Elongation factor Tu from Psychrobacter cryohalolentis (strain ATCC BAA-1226 / DSM 17306 / VKM B-2378 / K5).